The following is a 1186-amino-acid chain: DNA excision repair protein ERCC-5 (1186 aa).

The interval 1-78 is N-domain; that stretch reads MGVQGLWKLL…RIRPIFVFDG (78 aa). Lys-8 carries the post-translational modification N6-acetyllysine. Residue Asp-30 participates in Mg(2+) binding. The tract at residues 31-67 is DNA-binding; may bind to the undamaged single-strand DNA of the DNA repair bubble; that stretch reads ISIWLNQALKGVRDRHGNSIENPHLLTLFHRLCKLLF. Asp-77 contributes to the Mg(2+) binding site. Residues 79–785 are spacer region; it reads DAPLLKKQTL…LRLFGIPYIQ (707 aa). 5 disordered regions span residues 306–342, 354–385, 404–473, 510–533, and 667–724; these read ESLP…PPSP, GSSS…SISP, CAGD…SVPK, HSDA…TNSV, and QAEF…AEDS. Residues 325 to 336 are compositionally biased toward basic and acidic residues; that stretch reads PCEKLKTEKEPD. The residue at position 384 (Ser-384) is a Phosphoserine. The span at 454 to 472 shows a compositional bias: basic and acidic residues; sequence AEEHVASTNEGREPTDSVP. Ser-705 is subject to Phosphoserine. The tract at residues 786-881 is I-domain; that stretch reads APMEAEAQCA…VTAMEILNEF (96 aa). Mg(2+) is bound by residues Glu-789, Glu-791, Asp-810, and Asp-812. The tract at residues 820-836 is DNA-binding; may bind to the undamaged single-strand DNA of the DNA repair bubble; the sequence is HVYRNFFNKNKFVEYYQ. A DNA-binding; H2TH (helix-2turn-helix) motif which binds double-stranded DNA region spans residues 848–880; the sequence is RNKLINLAYLLGSDYTEGIPTVGCVTAMEILNE. A Mg(2+)-binding site is contributed by Asp-861. A DNA-binding; may bind double-stranded DNA region spans residues 912–918; it reads TKVKKKL. The segment at 981 to 1009 is interaction with PCNA; that stretch reads LKQLDAQQTQLRIDSFFRLAQQEKEDAKR. The interval 1011-1186 is interaction with ERCC6/CSB; that stretch reads KSQRLNRAVT…RRARGRKRKT (176 aa). Disordered regions lie at residues 1056-1081 and 1095-1186; these read QKRG…SKGK and ESSD…KRKT. Residues 1057-1074 carry the Nuclear localization signal 1 motif; sequence KRGITNTLEESSSLKRKR. Over residues 1124–1133 the composition is skewed to polar residues; that stretch reads TSASDSQNSV. A Nuclear localization signal 2 motif is present at residues 1169 to 1186; that stretch reads FGKKRRKLRRARGRKRKT. Basic residues predominate over residues 1169–1186; that stretch reads FGKKRRKLRRARGRKRKT.

This sequence belongs to the XPG/RAD2 endonuclease family. XPG subfamily. As to quaternary structure, monomer. Homodimer. Component of the homologous recombination repair (HR) complex composed of ERCC5/XPG, BRCA2, PALB2, DSS1 and RAD51. Within the complex, interacts with BRCA2 and PALB2. Interacts with RNA polymerase II. Interacts (via C-terminus) with ERCC6/CSB; the interaction stimulates ERCC6/CSB binding to the DNA repair bubble and ERCC6/CSB ATPase activity. May form a complex composed of RNA polymerase II, ERCC6/CSB and ERCC5/XPG which associates with the DNA repair bubble during transcription-coupled nucleotide excision repair. Interacts with BRCA1; the interaction promotes the release of BRCA1 from DNA. Interacts with PCNA. Interacts with NTHL1; the interaction stimulates NTHL1 activity and NTHL1 binding to its DNA substrate. Requires Mg(2+) as cofactor.

The protein resides in the nucleus. The protein localises to the chromosome. Single-stranded structure-specific DNA endonuclease involved in DNA excision repair. Makes the 3'incision in DNA nucleotide excision repair (NER). Binds and bends DNA repair bubble substrate and breaks base stacking at the single-strand/double-strand DNA junction of the DNA bubble. Plays a role in base excision repair (BER) by promoting the binding of DNA glycosylase NTHL1 to its substrate and increasing NTHL1 catalytic activity that removes oxidized pyrimidines from DNA. Involved in transcription-coupled nucleotide excision repair (TCR) which allows RNA polymerase II-blocking lesions to be rapidly removed from the transcribed strand of active genes. Functions during the initial step of TCR in cooperation with ERCC6/CSB to recognized stalled RNA polymerase II. Also, stimulates ERCC6/CSB binding to the DNA repair bubble and ERCC6/CSB ATPase activity. Required for DNA replication fork maintenance and preservation of genomic stability. Involved in homologous recombination repair (HRR) induced by DNA replication stress by recruiting RAD51, BRCA2, and PALB2 to the damaged DNA site. In TFIIH stimulates the 5'-3' helicase activity of XPD/ERCC2 and the DNA translocase activity of XPB/ERCC3. During HRR, binds to the replication fork with high specificity and stabilizes it. Also, acts upstream of HRR, to promote the release of BRCA1 from DNA. The sequence is that of DNA excision repair protein ERCC-5 (ERCC5) from Homo sapiens (Human).